We begin with the raw amino-acid sequence, 475 residues long: PRAME family member 20 (475 aa).

The LRR 1; degenerate repeat unit spans residues 97 to 124 (RWKLQVLDLQDVSENFWMVWSEAMARRC). An LRR 2; degenerate repeat occupies 179–203 (HLCCKKLKMLGMLFHNIRNILKTVN). An LRR 3; degenerate repeat occupies 204-230 (LDCIQEVEVNCNWTLPVLAEFTPYLGQ). One copy of the LRR 4; degenerate repeat lies at 231–265 (MRNLRKLVLSDIDSRYISPEQKKEFVTQFTTQFLK). LRR repeat units lie at residues 266–291 (LRCLQKLYMNSVSFLEGHLDQMLSCL), 292–323 (KTSLNILAITNCVLLESDLKHLSKYPSIGQLK), 324–342 (TLDLSGTRLANFSLVPLQV), 348–375 (AATLEYLDLDDCGIVDSQVNAILPALSR), and 376–400 (CFELTTFSFRGNPISTATLENLLCH).

This sequence belongs to the PRAME family.

The polypeptide is PRAME family member 20 (Homo sapiens (Human)).